Consider the following 310-residue polypeptide: Chromatin modification-related protein EAF3 (310 aa).

The region spanning 8-80 (KCLCYHGPLL…DEWVGQERIR (73 aa)) is the Tudor-knot domain. A disordered region spans residues 104 to 128 (AKRAKARPGKRERSPAPAAPAAPAQ). Low complexity predominate over residues 118–127 (PAPAAPAAPA). Residues 128-308 (QGPRLAVRMP…TSAQYEGVAL (181 aa)) enclose the MRG domain.

Belongs to the MRG family. In terms of assembly, component of the NuA4 histone acetyltransferase complex.

It is found in the nucleus. Its function is as follows. Involved in deacetylation of histones, chromatin assembly and chromosome segregation. May act as a transcriptional oscillator, directing histone deacetylases to specific chromosomal domains. Component of the NuA4 histone acetyltransferase complex which is involved in transcriptional activation of selected genes principally by acetylation of nucleosomal histone H4 and H2A. The NuA4 complex is also involved in DNA repair. The polypeptide is Chromatin modification-related protein EAF3 (EAF3) (Eremothecium gossypii (strain ATCC 10895 / CBS 109.51 / FGSC 9923 / NRRL Y-1056) (Yeast)).